We begin with the raw amino-acid sequence, 658 residues long: UvrABC system protein B (658 aa).

Residues 26–414 (DGLRRGVKHQ…PGVVEQIIRP (389 aa)) enclose the Helicase ATP-binding domain. 39–46 (GATGTGKT) contacts ATP. Residues 92–115 (YYDYYQPEAYVPQTDTYIEKDAKI) carry the Beta-hairpin motif. A Helicase C-terminal domain is found at 430 to 596 (QIDDLIGEIR…TVKKEIRDVI (167 aa)). A UVR domain is found at 622–657 (EELIRTLEAEMKEAAKALDFERAAQLRDIIFELKAE).

The protein belongs to the UvrB family. In terms of assembly, forms a heterotetramer with UvrA during the search for lesions. Interacts with UvrC in an incision complex.

It is found in the cytoplasm. The UvrABC repair system catalyzes the recognition and processing of DNA lesions. A damage recognition complex composed of 2 UvrA and 2 UvrB subunits scans DNA for abnormalities. Upon binding of the UvrA(2)B(2) complex to a putative damaged site, the DNA wraps around one UvrB monomer. DNA wrap is dependent on ATP binding by UvrB and probably causes local melting of the DNA helix, facilitating insertion of UvrB beta-hairpin between the DNA strands. Then UvrB probes one DNA strand for the presence of a lesion. If a lesion is found the UvrA subunits dissociate and the UvrB-DNA preincision complex is formed. This complex is subsequently bound by UvrC and the second UvrB is released. If no lesion is found, the DNA wraps around the other UvrB subunit that will check the other stand for damage. This is UvrABC system protein B from Geobacillus kaustophilus (strain HTA426).